The sequence spans 329 residues: Glycerol-3-phosphate dehydrogenase [NAD(P)+] (329 aa).

The NADPH site is built by Trp-15, His-35, and Lys-107. Lys-107, Gly-135, and Ser-137 together coordinate sn-glycerol 3-phosphate. Ala-139 provides a ligand contact to NADPH. Sn-glycerol 3-phosphate-binding residues include Lys-190, Asp-243, Ser-253, Arg-254, and Asn-255. Lys-190 serves as the catalytic Proton acceptor. Arg-254 provides a ligand contact to NADPH. Residues Leu-276 and Glu-278 each coordinate NADPH.

Belongs to the NAD-dependent glycerol-3-phosphate dehydrogenase family.

It localises to the cytoplasm. The enzyme catalyses sn-glycerol 3-phosphate + NAD(+) = dihydroxyacetone phosphate + NADH + H(+). It carries out the reaction sn-glycerol 3-phosphate + NADP(+) = dihydroxyacetone phosphate + NADPH + H(+). It participates in membrane lipid metabolism; glycerophospholipid metabolism. Its function is as follows. Catalyzes the reduction of the glycolytic intermediate dihydroxyacetone phosphate (DHAP) to sn-glycerol 3-phosphate (G3P), the key precursor for phospholipid synthesis. The protein is Glycerol-3-phosphate dehydrogenase [NAD(P)+] of Rhodopseudomonas palustris (strain TIE-1).